The sequence spans 1399 residues: Meiosis-specific protein ASY2 (1399 aa).

Residues 10-248 (QQSLILTTEL…SQHHVLTVKV (239 aa)) form the HORMA domain. Acidic residues predominate over residues 257-266 (PCEDENDNMQ). 5 disordered regions span residues 257-281 (PCED…HDDQ), 487-525 (SKPK…SSEP), 617-656 (RLTG…AAPE), 940-974 (PPPP…VDQV), and 1045-1090 (DQDK…AAPK). Residues 267 to 281 (DDERSKGPDSLHDDQ) show a composition bias toward basic and acidic residues. Residues 509–523 (SAPPSSEPKSAPPSS) are compositionally biased toward pro residues. Polar residues predominate over residues 617–631 (RLTGNPSNEAQSSRS). A coiled-coil region spans residues 1205-1246 (MASLRDAAEIHKAEMSSLNDEVKRLNSREADLQKEFSDLQVA).

The protein resides in the chromosome. Its subcellular location is the nucleus. Its function is as follows. Required for normal meiosis. In Arabidopsis thaliana (Mouse-ear cress), this protein is Meiosis-specific protein ASY2.